Consider the following 202-residue polypeptide: Large ribosomal subunit protein bL25 (202 aa).

It belongs to the bacterial ribosomal protein bL25 family. CTC subfamily. Part of the 50S ribosomal subunit; part of the 5S rRNA/L5/L18/L25 subcomplex. Contacts the 5S rRNA. Binds to the 5S rRNA independently of L5 and L18.

This is one of the proteins that binds to the 5S RNA in the ribosome where it forms part of the central protuberance. The polypeptide is Large ribosomal subunit protein bL25 (Chlorobium luteolum (strain DSM 273 / BCRC 81028 / 2530) (Pelodictyon luteolum)).